A 117-amino-acid chain; its full sequence is uncharacterized protein (117 aa).

This is an uncharacterized protein from Homo sapiens (Human).